The chain runs to 201 residues: Glycerol-3-phosphate acyltransferase (201 aa).

The next 6 helical transmembrane spans lie at 10-30, 60-80, 86-106, 116-136, 139-159, and 166-186; these read MLIGALIFGYVLGSIPFGLIL, LAAATLILDALKGTAAALIAA, AAIAAGFGAFIGHLFPVWIGF, LGVLIGLAWAGALVFAAAWIV, LLTRYSSLSALVASLVVPIAL, and ALAALFAIMTVIVFIKHRANI.

Belongs to the PlsY family. As to quaternary structure, probably interacts with PlsX.

The protein localises to the cell inner membrane. It carries out the reaction an acyl phosphate + sn-glycerol 3-phosphate = a 1-acyl-sn-glycero-3-phosphate + phosphate. Its pathway is lipid metabolism; phospholipid metabolism. Its function is as follows. Catalyzes the transfer of an acyl group from acyl-phosphate (acyl-PO(4)) to glycerol-3-phosphate (G3P) to form lysophosphatidic acid (LPA). This enzyme utilizes acyl-phosphate as fatty acyl donor, but not acyl-CoA or acyl-ACP. The chain is Glycerol-3-phosphate acyltransferase from Brucella suis (strain ATCC 23445 / NCTC 10510).